Reading from the N-terminus, the 246-residue chain is Aspartate/glutamate leucyltransferase (246 aa).

It belongs to the R-transferase family. Bpt subfamily.

Its subcellular location is the cytoplasm. The catalysed reaction is N-terminal L-glutamyl-[protein] + L-leucyl-tRNA(Leu) = N-terminal L-leucyl-L-glutamyl-[protein] + tRNA(Leu) + H(+). It carries out the reaction N-terminal L-aspartyl-[protein] + L-leucyl-tRNA(Leu) = N-terminal L-leucyl-L-aspartyl-[protein] + tRNA(Leu) + H(+). Its function is as follows. Functions in the N-end rule pathway of protein degradation where it conjugates Leu from its aminoacyl-tRNA to the N-termini of proteins containing an N-terminal aspartate or glutamate. The polypeptide is Aspartate/glutamate leucyltransferase (Rhodospirillum rubrum (strain ATCC 11170 / ATH 1.1.1 / DSM 467 / LMG 4362 / NCIMB 8255 / S1)).